The primary structure comprises 379 residues: Type II methyltransferase M.CvrRI (379 aa).

It belongs to the N(4)/N(6)-methyltransferase family.

It catalyses the reaction a 2'-deoxyadenosine in DNA + S-adenosyl-L-methionine = an N(6)-methyl-2'-deoxyadenosine in DNA + S-adenosyl-L-homocysteine + H(+). A gamma subtype methylase, recognizes the double-stranded sequence 5'-TGCA-3', methylates A-4 on both strands, and protects the DNA from cleavage by the CviRI endonuclease. The protein is Type II methyltransferase M.CvrRI (CVIRIM) of Chlorella (PBCV-XZ-6E).